The following is a 336-amino-acid chain: Tryptophan--tRNA ligase (336 aa).

ATP is bound by residues 11-13 (TTT) and 19-20 (GN). The short motif at 12–20 (TTGIPHLGN) is the 'HIGH' region element. Asp-145 is a binding site for L-tryptophan. Residues 157 to 159 (GRD), Leu-196, and 203 to 207 (KMSKS) each bind ATP. The 'KMSKS' region motif lies at 203–207 (KMSKS).

Belongs to the class-I aminoacyl-tRNA synthetase family. As to quaternary structure, homodimer.

Its subcellular location is the cytoplasm. It carries out the reaction tRNA(Trp) + L-tryptophan + ATP = L-tryptophyl-tRNA(Trp) + AMP + diphosphate + H(+). In terms of biological role, catalyzes the attachment of tryptophan to tRNA(Trp). The sequence is that of Tryptophan--tRNA ligase from Neisseria meningitidis serogroup A / serotype 4A (strain DSM 15465 / Z2491).